The sequence spans 359 residues: Peptide chain release factor 1 (359 aa).

Gln233 carries the N5-methylglutamine modification.

The protein belongs to the prokaryotic/mitochondrial release factor family. In terms of processing, methylated by PrmC. Methylation increases the termination efficiency of RF1.

The protein resides in the cytoplasm. Peptide chain release factor 1 directs the termination of translation in response to the peptide chain termination codons UAG and UAA. The polypeptide is Peptide chain release factor 1 (Orientia tsutsugamushi (strain Ikeda) (Rickettsia tsutsugamushi)).